A 158-amino-acid polypeptide reads, in one-letter code: MAEENKNNENFQYIVRIANKDLNGERPLKLALADLKGIGLRLSETIAKKLDLDPDQRIGELGEDKIEELRKYIEGKVYDGIPYWMYNHRRDITTGKDFNLVSNDLDLQINDDINLMKKMRSYKGIRHERGLKVRGQRMRSNGRKGLAIGVVRKKEEKK.

This sequence belongs to the universal ribosomal protein uS13 family. In terms of assembly, part of the 30S ribosomal subunit. Forms a loose heterodimer with protein S19. Forms two bridges to the 50S subunit in the 70S ribosome.

Located at the top of the head of the 30S subunit, it contacts several helices of the 16S rRNA. In the 70S ribosome it contacts the 23S rRNA (bridge B1a) and protein L5 of the 50S subunit (bridge B1b), connecting the 2 subunits; these bridges are implicated in subunit movement. The polypeptide is Small ribosomal subunit protein uS13 (Picrophilus torridus (strain ATCC 700027 / DSM 9790 / JCM 10055 / NBRC 100828 / KAW 2/3)).